The chain runs to 166 residues: 3-dehydroquinate dehydratase (166 aa).

Tyr22 serves as the catalytic Proton acceptor. 3 residues coordinate substrate: Asn73, His79, and Asp86. The Proton donor role is filled by His99. Substrate is bound by residues 100-101 and Arg110; that span reads IT.

This sequence belongs to the type-II 3-dehydroquinase family. Homododecamer.

It carries out the reaction 3-dehydroquinate = 3-dehydroshikimate + H2O. The protein operates within metabolic intermediate biosynthesis; chorismate biosynthesis; chorismate from D-erythrose 4-phosphate and phosphoenolpyruvate: step 3/7. In terms of biological role, catalyzes a trans-dehydration via an enolate intermediate. This Wolinella succinogenes (strain ATCC 29543 / DSM 1740 / CCUG 13145 / JCM 31913 / LMG 7466 / NCTC 11488 / FDC 602W) (Vibrio succinogenes) protein is 3-dehydroquinate dehydratase.